The primary structure comprises 92 residues: Cell division protein FtsB (92 aa).

Residues 1 to 3 (MRL) lie on the Cytoplasmic side of the membrane. A helical transmembrane segment spans residues 4–21 (LILILLSVLVLFQYNFWF). The Periplasmic segment spans residues 22–92 (GSNGFLDYRQ…VFYHIVKESK (71 aa)). A coiled-coil region spans residues 28–63 (DYRQNAEKIKENQAENEKLSQRNQRINAEIQGLTKG).

This sequence belongs to the FtsB family. As to quaternary structure, part of a complex composed of FtsB, FtsL and FtsQ.

It is found in the cell inner membrane. In terms of biological role, essential cell division protein. May link together the upstream cell division proteins, which are predominantly cytoplasmic, with the downstream cell division proteins, which are predominantly periplasmic. This Haemophilus influenzae (strain 86-028NP) protein is Cell division protein FtsB.